Here is a 644-residue protein sequence, read N- to C-terminus: Replication protein E1 (644 aa).

The Nuclear localization signal signature appears at 86–88 (KRK). Positions 179 to 345 (CENVTLQEIS…LTVLQHSFND (167 aa)) are DNA-binding region. Residues 312–644 (LYWFRTAMSN…AGENTRSLRS (333 aa)) form a required for E2 binding region. The SF3 helicase domain maps to 444-594 (IEFTAFLGAF…FPFDENGNPV (151 aa)). Residue 470-477 (GPANTGKS) coordinates ATP. K551 is covalently cross-linked (Glycyl lysine isopeptide (Lys-Gly) (interchain with G-Cter in SUMO)).

This sequence belongs to the papillomaviridae E1 protein family. As to quaternary structure, can form hexamers. Interacts with E2 protein; this interaction increases E1 DNA binding specificity. Interacts with host DNA polymerase subunit POLA2. Interacts with host single stranded DNA-binding protein RPA1. Interacts with host TOP1; this interaction stimulates the enzymatic activity of TOP1. Post-translationally, phosphorylated. Sumoylated.

Its subcellular location is the host nucleus. It catalyses the reaction Couples ATP hydrolysis with the unwinding of duplex DNA by translocating in the 3'-5' direction.. It carries out the reaction ATP + H2O = ADP + phosphate + H(+). Its function is as follows. ATP-dependent DNA 3'-5' helicase required for initiation of viral DNA replication. It forms a complex with the viral E2 protein. The E1-E2 complex binds to the replication origin which contains binding sites for both proteins. During the initial step, a dimer of E1 interacts with a dimer of protein E2 leading to a complex that binds the viral origin of replication with high specificity. Then, a second dimer of E1 displaces the E2 dimer in an ATP-dependent manner to form the E1 tetramer. Following this, two E1 monomers are added to each half of the site, which results in the formation of two E1 trimers on the viral ori. Subsequently, two hexamers will be created. The double hexamer acts as a bi-directional helicase machinery and unwinds the viral DNA and then recruits the host DNA polymerase to start replication. The polypeptide is Replication protein E1 (Human papillomavirus 33).